A 144-amino-acid chain; its full sequence is MKGAKSKTETRSSKLSVTKKPAKGAGRGKAAAKDPNKPKRPASAFFVFMEDFRETFKKENPKNKSVATVGKAAGDKWKSLSDSEKAPYVAKAEKRKVEYEKNIKAYNKKLEEGPKEDEESDKSVSEVNDEDDAEDGSEEEEDDD.

Composition is skewed to basic and acidic residues over residues 1-12 and 73-94; these read MKGAKSKTETRS and AGDK…KAEK. Disordered stretches follow at residues 1–42, 57–94, and 106–144; these read MKGA…KRPA, KKEN…KAEK, and YNKK…EDDD. The HMG box DNA-binding region spans 38-107; the sequence is PKRPASAFFV…EYEKNIKAYN (70 aa). Ser-125 is modified (phosphoserine). The span at 127 to 144 shows a compositional bias: acidic residues; that stretch reads VNDEDDAEDGSEEEEDDD.

It belongs to the HMGB family. In terms of tissue distribution, mostly expressed in cotyledons, hypocotyls, leaves, and flowers (excluding pedicels), also present in roots and stems.

It localises to the nucleus. The protein localises to the cytoplasm. The protein resides in the cytosol. Functionally, binds preferentially double-stranded DNA. Confers sensitivity to salt and drought stresses. This chain is High mobility group B protein 2 (HMGB2), found in Arabidopsis thaliana (Mouse-ear cress).